We begin with the raw amino-acid sequence, 314 residues long: Protoheme IX farnesyltransferase 2 (314 aa).

Transmembrane regions (helical) follow at residues 32–49 (VMSLVVFTAFVGLVAAPV), 54–76 (LLAVIAILSIAIGAGASGALNMW), 98–118 (IQPHEALSFGLVLSVLSVMTL), 120–140 (VLVNWLSATLLAFTIFFYAVV), 153–173 (IVIGGAAGAIPPVIGWAAVTG), 180–200 (IVLFLIIFLWTPPHFWALALF), 226–246 (IFAYALVLAPVGVAPWLLGYT), 249–269 (FYGVAAMLLGLGFVWYAWKVL), and 285–305 (FAYSLLYLFAIFAAYLADSVV).

This sequence belongs to the UbiA prenyltransferase family. Protoheme IX farnesyltransferase subfamily.

It is found in the cell inner membrane. The catalysed reaction is heme b + (2E,6E)-farnesyl diphosphate + H2O = Fe(II)-heme o + diphosphate. It participates in porphyrin-containing compound metabolism; heme O biosynthesis; heme O from protoheme: step 1/1. Its function is as follows. Converts heme B (protoheme IX) to heme O by substitution of the vinyl group on carbon 2 of heme B porphyrin ring with a hydroxyethyl farnesyl side group. The polypeptide is Protoheme IX farnesyltransferase 2 (Mesorhizobium japonicum (strain LMG 29417 / CECT 9101 / MAFF 303099) (Mesorhizobium loti (strain MAFF 303099))).